The primary structure comprises 146 residues: Globin (146 aa).

Ser-1 carries the N-acetylserine modification. The region spanning 1-146 is the Globin domain; sequence SLSGAEADLL…IIDALKKAGK (146 aa). His-95 contributes to the heme b binding site.

It belongs to the globin family. Monomer.

This is Globin from Bursatella leachii (Ragged sea hare).